A 304-amino-acid chain; its full sequence is Acetyl-coenzyme A carboxylase carboxyl transferase subunit beta (304 aa).

The region spanning 25-294 (VWTKCDSCGQ…PSVVESKADT (270 aa)) is the CoA carboxyltransferase N-terminal domain. Zn(2+) is bound by residues Cys29, Cys32, Cys48, and Cys51. The segment at 29 to 51 (CDSCGQVLYRAELERNLEVCPKC) adopts a C4-type zinc-finger fold.

It belongs to the AccD/PCCB family. Acetyl-CoA carboxylase is a heterohexamer composed of biotin carboxyl carrier protein (AccB), biotin carboxylase (AccC) and two subunits each of ACCase subunit alpha (AccA) and ACCase subunit beta (AccD). It depends on Zn(2+) as a cofactor.

It is found in the cytoplasm. It carries out the reaction N(6)-carboxybiotinyl-L-lysyl-[protein] + acetyl-CoA = N(6)-biotinyl-L-lysyl-[protein] + malonyl-CoA. It participates in lipid metabolism; malonyl-CoA biosynthesis; malonyl-CoA from acetyl-CoA: step 1/1. In terms of biological role, component of the acetyl coenzyme A carboxylase (ACC) complex. Biotin carboxylase (BC) catalyzes the carboxylation of biotin on its carrier protein (BCCP) and then the CO(2) group is transferred by the transcarboxylase to acetyl-CoA to form malonyl-CoA. This is Acetyl-coenzyme A carboxylase carboxyl transferase subunit beta from Yersinia pseudotuberculosis serotype O:1b (strain IP 31758).